We begin with the raw amino-acid sequence, 411 residues long: uncharacterized protein (411 aa).

This is an uncharacterized protein from Mycoplasma genitalium (strain ATCC 33530 / DSM 19775 / NCTC 10195 / G37) (Mycoplasmoides genitalium).